A 716-amino-acid chain; its full sequence is Eosinophil peroxidase (716 aa).

The signal sequence occupies residues 1-18 (MMQQLLALVGALATLILT). Positions 19–140 (QHAEGTAPAS…SGCALQDQAE (122 aa)) are excised as a propeptide. Residues Asn53 and Asn114 are each glycosylated (N-linked (GlcNAc...) asparagine). An intrachain disulfide couples Cys142 to Cys153. Asp233 is a heme b binding site. His234 (proton acceptor) is an active-site residue. Residue Asp235 participates in Ca(2+) binding. Cystine bridges form between Cys254–Cys264 and Cys258–Cys282. Ca(2+) is bound by residues Thr307, Phe309, Asp311, and Ser313. Residues Asn328 and Asn364 are each glycosylated (N-linked (GlcNAc...) asparagine). An intrachain disulfide couples Cys360 to Cys371. 2 residues coordinate heme b: Glu381 and His475. The residue at position 489 (Tyr489) is a 3'-nitrotyrosine. 2 disulfide bridges follow: Cys579-Cys636 and Cys677-Cys702. Asn709 is a glycosylation site (N-linked (GlcNAc...) asparagine).

It belongs to the peroxidase family. XPO subfamily. In terms of assembly, tetramer of two light chains and two heavy chains. The cofactor is Ca(2+). Heme b is required as a cofactor.

Its subcellular location is the cytoplasmic granule. It carries out the reaction 2 a phenolic donor + H2O2 = 2 a phenolic radical donor + 2 H2O. In terms of biological role, mediates tyrosine nitration of secondary granule proteins in mature resting eosinophils. This chain is Eosinophil peroxidase (Epx), found in Mus musculus (Mouse).